We begin with the raw amino-acid sequence, 266 residues long: Pre-mRNA-splicing factor PRP11 (266 aa).

The segment at 1-21 is disordered; the sequence is MNYLEGVGSKKGGGGIASESQ. The Matrin-type zinc-finger motif lies at 66–96; sequence LVCKLCNTMHMSWSSVERHLGGKKHGLNVLR.

The protein belongs to the SF3A2 family. Belongs to the CWC complex (or CEF1-associated complex), a spliceosome sub-complex reminiscent of a late-stage spliceosome composed of the U2, U5 and U6 snRNAs and at least BUD13, BUD31, BRR2, CDC40, CEF1, CLF1, CUS1, CWC2, CWC15, CWC21, CWC22, CWC23, CWC24, CWC25, CWC27, ECM2, HSH155, IST3, ISY1, LEA1, MSL1, NTC20, PRP8, PRP9, PRP11, PRP19, PRP21, PRP22, PRP45, PRP46, SLU7, SMB1, SMD1, SMD2, SMD3, SMX2, SMX3, SNT309, SNU114, SPP2, SYF1, SYF2, RSE1 and YJU2. Interacts with CUS2.

It localises to the nucleus. MRNA splicing factors, PRP9, PRP11, and PRP21, are necessary for addition of the U2 snRNP to the pre-mRNA in an early step of spliceosome assembly. In Saccharomyces cerevisiae (strain ATCC 204508 / S288c) (Baker's yeast), this protein is Pre-mRNA-splicing factor PRP11 (PRP11).